The primary structure comprises 107 residues: Phosphoribosyl-ATP pyrophosphatase (107 aa).

It belongs to the PRA-PH family.

It localises to the cytoplasm. It catalyses the reaction 1-(5-phospho-beta-D-ribosyl)-ATP + H2O = 1-(5-phospho-beta-D-ribosyl)-5'-AMP + diphosphate + H(+). It participates in amino-acid biosynthesis; L-histidine biosynthesis; L-histidine from 5-phospho-alpha-D-ribose 1-diphosphate: step 2/9. This is Phosphoribosyl-ATP pyrophosphatase from Methylobacterium radiotolerans (strain ATCC 27329 / DSM 1819 / JCM 2831 / NBRC 15690 / NCIMB 10815 / 0-1).